The chain runs to 273 residues: Putative pyruvate, phosphate dikinase regulatory protein (273 aa).

149–156 contributes to the ADP binding site; the sequence is GPSRTSKT.

This sequence belongs to the pyruvate, phosphate/water dikinase regulatory protein family. PDRP subfamily.

The catalysed reaction is N(tele)-phospho-L-histidyl/L-threonyl-[pyruvate, phosphate dikinase] + ADP = N(tele)-phospho-L-histidyl/O-phospho-L-threonyl-[pyruvate, phosphate dikinase] + AMP + H(+). It carries out the reaction N(tele)-phospho-L-histidyl/O-phospho-L-threonyl-[pyruvate, phosphate dikinase] + phosphate + H(+) = N(tele)-phospho-L-histidyl/L-threonyl-[pyruvate, phosphate dikinase] + diphosphate. Functionally, bifunctional serine/threonine kinase and phosphorylase involved in the regulation of the pyruvate, phosphate dikinase (PPDK) by catalyzing its phosphorylation/dephosphorylation. This Rickettsia conorii (strain ATCC VR-613 / Malish 7) protein is Putative pyruvate, phosphate dikinase regulatory protein.